The chain runs to 265 residues: Tyrosine protein kinase-interacting protein (265 aa).

Over residues 1–14 (MANEGEEIELTEFP) the composition is skewed to acidic residues. The tract at residues 1–49 (MANEGEEIELTEFPETEKERKDEEKLSSCSEETTDTSSSSSSDHVPAPI) is disordered. The Cytoplasmic segment spans residues 1–238 (MANEGEEIEL…LKRLENKVNA (238 aa)). Positions 15–26 (ETEKERKDEEKL) are enriched in basic and acidic residues. Residues 27–43 (SSCSEETTDTSSSSSSD) show a composition bias toward low complexity. The residue at position 123 (Tyr-123) is a Phosphotyrosine; by host LCK. Tyr-136 bears the Phosphotyrosine; by host mark. The CSKH/LBD2 stretch occupies residues 155 to 164 (EDLQSFLEKY). The tract at residues 172–192 (KRDLSATWDPGMPTPALPPRP) is disordered. The segment at 183 to 192 (MPTPALPPRP) is SH3B/LBD1. Positions 183–192 (MPTPALPPRP) are enriched in pro residues. The tract at residues 225-234 (IVKDLKRLEN) is SH3 binding. A helical transmembrane segment spans residues 239-259 (IICLVVVILAVLLLVTVLSIL). Over 260-265 (HIGMKS) the chain is Extracellular.

Binds host LCK, human WDR48 and human NXF1/TAP. Forms a complex with activated LCK and STAT1 and STAT3. Phosphorylation on Tyr-123 acts as a docking site for the recruitment of STATs 1 and 3.

The protein resides in the host cell membrane. Functionally, plays a critical role in virus induced T-cell transformation. Binds to T-cell-specific tyrosine kinase LCK SH2 and SH3 domains, thereby activating its kinase activity. Once phosphorylated by host LCK, forms a complex with at least STAT 1 and 3, resulting on the phosphorylation of STAT3 and presumably STAT1, and their migration into the nucleus to induce transcription of target genes. Stimulates host ILF3/NF-AT-90 activity. Association with host NXF1/TAP transduces the signal up-regulating surface expression of adhesion molecules as well as activating NF-kappa-B activity. Acts synergistically with StpC to stimulate NF-kappa-B activity and interleukin-2 gene expression. Activation of NF-kappa-B protects lymphocytes from apoptosis, thereby facilitating viral induced cell transformation. May cause down-regulation of host LCK and cell apoptosis when stably overexpressed ex vivo. Interaction with WDR48 induce degradation of T-cell receptor in a lysosome-dependent fashion, when both proteins are overexpressed. The biological effect of this interaction remains controversial since no T-cell receptor degradation is observed in infected cells. This Saimiriine herpesvirus 2 (strain 484) (SaHV-2) protein is Tyrosine protein kinase-interacting protein.